Reading from the N-terminus, the 222-residue chain is Cytidylate kinase (222 aa).

ATP is bound at residue 9–17; it reads GPSGAGKST.

This sequence belongs to the cytidylate kinase family. Type 1 subfamily.

Its subcellular location is the cytoplasm. The catalysed reaction is CMP + ATP = CDP + ADP. It catalyses the reaction dCMP + ATP = dCDP + ADP. This is Cytidylate kinase from Thermodesulfovibrio yellowstonii (strain ATCC 51303 / DSM 11347 / YP87).